The following is a 341-amino-acid chain: uncharacterized protein (341 aa).

This is an uncharacterized protein from Mycobacterium bovis (strain ATCC BAA-935 / AF2122/97).